The sequence spans 116 residues: Iron-sulfur cluster insertion protein ErpA (116 aa).

Iron-sulfur cluster-binding residues include C44, C108, and C110.

Belongs to the HesB/IscA family. As to quaternary structure, homodimer. The cofactor is iron-sulfur cluster.

In terms of biological role, required for insertion of 4Fe-4S clusters for at least IspG. The chain is Iron-sulfur cluster insertion protein ErpA from Francisella tularensis subsp. mediasiatica (strain FSC147).